Consider the following 129-residue polypeptide: Azurin-1 (129 aa).

A Plastocyanin-like domain is found at 1–129; that stretch reads AECSVDIAGN…LMKGVLKLVD (129 aa). C3 and C26 form a disulfide bridge. Positions 46, 112, 117, and 121 each coordinate Cu cation.

The protein resides in the periplasm. Functionally, transfers electrons from cytochrome c551 to cytochrome oxidase. In Alcaligenes xylosoxydans xylosoxydans (Achromobacter xylosoxidans), this protein is Azurin-1.